The chain runs to 408 residues: Tryptophan--tRNA ligase, chloroplastic/mitochondrial (408 aa).

A chloroplast and mitochondrion-targeting transit peptide spans 1–52 (MGHATSLSHFLILSSSRFSRLGSLTRLLSKPTSLSGSFSSISVTGQGFRCCC). An N-acetylserine modification is found at Ser53. ATP contacts are provided by residues Gln72 and 78–81 (HLGN). The short motif at 73–81 (PTGSVHLGN) is the 'HIGH' region element. Residue Asp197 participates in L-tryptophan binding. ATP is bound by residues 209–211 (GED), Val260, 269–273 (KMSKS), and Lys272. Residues 269-273 (KMSKS) carry the 'KMSKS' region motif.

The protein belongs to the class-I aminoacyl-tRNA synthetase family.

The protein localises to the plastid. The protein resides in the chloroplast. It is found in the mitochondrion. The catalysed reaction is tRNA(Trp) + L-tryptophan + ATP = L-tryptophyl-tRNA(Trp) + AMP + diphosphate + H(+). The chain is Tryptophan--tRNA ligase, chloroplastic/mitochondrial from Arabidopsis thaliana (Mouse-ear cress).